The chain runs to 207 residues: Glycerol-3-phosphate acyltransferase (207 aa).

5 helical membrane passes run 2–22 (ILVL…GVVI), 47–67 (MLGP…GTLA), 72–92 (ILFG…AVFG), 121–141 (FFVI…MVSV), and 155–175 (LVYH…VFLI).

It belongs to the PlsY family. Probably interacts with PlsX.

The protein localises to the cell membrane. The enzyme catalyses an acyl phosphate + sn-glycerol 3-phosphate = a 1-acyl-sn-glycero-3-phosphate + phosphate. The protein operates within lipid metabolism; phospholipid metabolism. Catalyzes the transfer of an acyl group from acyl-phosphate (acyl-PO(4)) to glycerol-3-phosphate (G3P) to form lysophosphatidic acid (LPA). This enzyme utilizes acyl-phosphate as fatty acyl donor, but not acyl-CoA or acyl-ACP. This is Glycerol-3-phosphate acyltransferase from Lacticaseibacillus casei (strain BL23) (Lactobacillus casei).